Reading from the N-terminus, the 238-residue chain is Probable transcriptional regulatory protein IL0164 (238 aa).

It belongs to the TACO1 family.

The protein resides in the cytoplasm. The sequence is that of Probable transcriptional regulatory protein IL0164 from Idiomarina loihiensis (strain ATCC BAA-735 / DSM 15497 / L2-TR).